The sequence spans 100 residues: Vesicle-associated membrane protein 8 (100 aa).

Met1 carries the N-acetylmethionine modification. The Cytoplasmic segment spans residues 1–75; that stretch reads MEEASEGGGN…ARKFWWKNVK (75 aa). Residues Ser5 and Ser18 each carry the phosphoserine modification. Residues 12–72 form the v-SNARE coiled-coil homology domain; the sequence is RVRNLQSEVE…QKVARKFWWK (61 aa). Phosphothreonine occurs at positions 28, 48, and 54. Ser55 carries the post-translational modification Phosphoserine. Residues Lys64 and Lys68 are each lipidated ((Microbial infection) N6-stearoyl lysine). Residues 76-96 traverse the membrane as a helical; Anchor for type IV membrane protein segment; it reads MIVLICVIVFIIILFIVLFAT. The Vesicular segment spans residues 97 to 100; the sequence is GAFS.

This sequence belongs to the synaptobrevin family. In terms of assembly, forms a SNARE complex composed of VAMP8, SNAP29 and STX17 involved in fusion of autophagosome with lysosome. Found in a number of SNARE complexes with NAPA, SNAP23, SNAP25, STX1A, STX4, STX7, STX8 and VTI1B. Interacts with PICALM. SNARE complex formation and binding by PICALM are mutually exclusive processes for VAMP8. Interacts with SBF2/MTMR13. Interacts with RAB21 (in GTP-bound form) in response to starvation; the interaction probably regulates VAMP8 endolysosomal trafficking. Interacts with STX17; this interaction is increased in the absence of TMEM39A. Interacts with TRIM6. As to quaternary structure, (Microbial infection) The interaction with STX17 is decreased in presence of SARS coronavirus-2/SARS-CoV-2 ORF3A protein. Post-translationally, (Microbial infection) Stearoylated By S.flexneri N-epsilon-fatty acyltransferase IcsB, thereby disrupting the host actin cytoskeleton. As to expression, platelets.

The protein localises to the lysosome membrane. The protein resides in the early endosome membrane. It is found in the late endosome membrane. Its subcellular location is the cell membrane. It localises to the zymogen granule membrane. In terms of biological role, SNAREs, soluble N-ethylmaleimide-sensitive factor-attachment protein receptors, are essential proteins for fusion of cellular membranes. SNAREs localized on opposing membranes assemble to form a trans-SNARE complex, an extended, parallel four alpha-helical bundle that drives membrane fusion. VAMP8 is a SNARE involved in autophagy through the direct control of autophagosome membrane fusion with the lysososome membrane via its interaction with the STX17-SNAP29 binary t-SNARE complex. Also required for dense-granule secretion in platelets. Also plays a role in regulated enzyme secretion in pancreatic acinar cells. Involved in the abscission of the midbody during cell division, which leads to completely separate daughter cells. Involved in the homotypic fusion of early and late endosomes. Also participates in the activation of type I interferon antiviral response through a TRIM6-dependent mechanism. This Homo sapiens (Human) protein is Vesicle-associated membrane protein 8.